We begin with the raw amino-acid sequence, 72 residues long: Mitochondrial import receptor subunit TOM7-1 (72 aa).

The Cytoplasmic segment spans residues 2-41 (LKPKGKNTKKAAAADEDDGAVAVVGKFVKEWGTWTAKKAK). Residues 42-59 (VITHYGFIPLVIIIGMNS) form a helical membrane-spanning segment. Residues 60–72 (EPKPSLSQLLSPV) lie on the Mitochondrial intermembrane side of the membrane.

It belongs to the Tom7 family. Forms part of the preprotein translocase complex of the outer mitochondrial membrane (TOM complex).

The protein resides in the mitochondrion outer membrane. Seems to act as a modulator of the dynamics of the mitochondrial protein transport machinery. Seems to promote the dissociation of subunits of the outer membrane translocase. The sequence is that of Mitochondrial import receptor subunit TOM7-1 (TOM7-1) from Solanum tuberosum (Potato).